The sequence spans 176 residues: Small ribosomal subunit protein uS5 (176 aa).

The S5 DRBM domain occupies 18-81 (FEEKMLFVNR…SIARKNMISV (64 aa)).

The protein belongs to the universal ribosomal protein uS5 family. In terms of assembly, part of the 30S ribosomal subunit. Contacts proteins S4 and S8.

Functionally, with S4 and S12 plays an important role in translational accuracy. In terms of biological role, located at the back of the 30S subunit body where it stabilizes the conformation of the head with respect to the body. In Deinococcus deserti (strain DSM 17065 / CIP 109153 / LMG 22923 / VCD115), this protein is Small ribosomal subunit protein uS5.